A 101-amino-acid polypeptide reads, in one-letter code: Apolipoprotein C-II (101 aa).

The signal sequence occupies residues 1–17 (MGTRFLLALCLVLLVLG). Residues 66–74 (AVDEKLRDL) form a lipid binding region. The segment at 78 to 101 (STAAMSTYTGIFTDQVLSVLKGEE) is lipoprotein lipase cofactor.

Belongs to the apolipoprotein C2 family. Post-translationally, proapolipoprotein C-II is synthesized as a sialic acid containing glycoprotein which is subsequently desialylated prior to its proteolytic processing. Proapolipoprotein C-II, the major form found in plasma undergoes proteolytic cleavage of its N-terminal hexapeptide to generate apolipoprotein C-II, which occurs as the minor form in plasma.

The protein localises to the secreted. Component of chylomicrons, very low-density lipoproteins (VLDL), low-density lipoproteins (LDL), and high-density lipoproteins (HDL) in plasma. Plays an important role in lipoprotein metabolism as an activator of lipoprotein lipase. Both proapolipoprotein C-II and apolipoprotein C-II can activate lipoprotein lipase. The polypeptide is Apolipoprotein C-II (APOC2) (Chlorocebus sabaeus (Green monkey)).